The following is a 139-amino-acid chain: Putative pre-16S rRNA nuclease (139 aa).

This sequence belongs to the YqgF nuclease family.

The protein localises to the cytoplasm. Functionally, could be a nuclease involved in processing of the 5'-end of pre-16S rRNA. The polypeptide is Putative pre-16S rRNA nuclease (Streptococcus equi subsp. equi (strain 4047)).